The chain runs to 92 residues: Putative septation protein SpoVG (92 aa).

The protein belongs to the SpoVG family.

Could be involved in septation. The chain is Putative septation protein SpoVG from Thermoanaerobacter sp. (strain X514).